The following is a 50-amino-acid chain: Phospholipase A2 trimorphin (50 aa).

Ca(2+)-binding residues include Tyr28, Gly30, and Gly32. The cysteines at positions 29 and 45 are disulfide-linked. The active site involves His48. Asp49 provides a ligand contact to Ca(2+).

Ca(2+) serves as cofactor. Expressed by the venom gland.

It localises to the secreted. It catalyses the reaction a 1,2-diacyl-sn-glycero-3-phosphocholine + H2O = a 1-acyl-sn-glycero-3-phosphocholine + a fatty acid + H(+). With respect to regulation, inhibited by EDTA. PLA2 catalyzes the calcium-dependent hydrolysis of the 2-acyl groups in 3-sn-phosphoglycerides. This Trimorphodon lambda (Sonoran lyre snake) protein is Phospholipase A2 trimorphin.